We begin with the raw amino-acid sequence, 180 residues long: Epididymal-specific lipocalin-6 (180 aa).

The N-terminal stretch at 1–20 (MGGLLLAALLALVAVPRAQA) is a signal peptide. Cys81 and Cys174 form a disulfide bridge.

It belongs to the calycin superfamily. Lipocalin family.

Its subcellular location is the secreted. May play a role in male fertility. This chain is Epididymal-specific lipocalin-6 (LCN6), found in Macaca mulatta (Rhesus macaque).